The sequence spans 304 residues: Pseudouridine-5'-phosphate glycosidase (304 aa).

Catalysis depends on E25, which acts as the Proton donor. Residues K86 and V106 each coordinate substrate. Position 138 (D138) interacts with Mn(2+). A substrate-binding site is contributed by S140–D142. The active-site Nucleophile is the K159.

The protein belongs to the pseudouridine-5'-phosphate glycosidase family. In terms of assembly, homotrimer. Requires Mn(2+) as cofactor.

The enzyme catalyses D-ribose 5-phosphate + uracil = psi-UMP + H2O. Functionally, catalyzes the reversible cleavage of pseudouridine 5'-phosphate (PsiMP) to ribose 5-phosphate and uracil. Functions biologically in the cleavage direction, as part of a pseudouridine degradation pathway. This Lysinibacillus sphaericus (strain C3-41) protein is Pseudouridine-5'-phosphate glycosidase.